The primary structure comprises 729 residues: Fatty acid oxidation complex subunit alpha (729 aa).

The interval 1 to 189 (MLYQSETLQL…KIGLVDAVVD (189 aa)) is enoyl-CoA hydratase/isomerase. D296 serves as a coordination point for substrate. Residues 311–729 (AAPKLAAVLG…LLDVSTNQPA (419 aa)) form a 3-hydroxyacyl-CoA dehydrogenase region. NAD(+) contacts are provided by residues M324, D343, 400 to 402 (VVE), K407, and S429. Residue H450 is the For 3-hydroxyacyl-CoA dehydrogenase activity of the active site. N453 contacts NAD(+). Substrate is bound by residues N500 and Y660.

It in the N-terminal section; belongs to the enoyl-CoA hydratase/isomerase family. This sequence in the C-terminal section; belongs to the 3-hydroxyacyl-CoA dehydrogenase family. Heterotetramer of two alpha chains (FadB) and two beta chains (FadA).

It carries out the reaction a (3S)-3-hydroxyacyl-CoA + NAD(+) = a 3-oxoacyl-CoA + NADH + H(+). The catalysed reaction is a (3S)-3-hydroxyacyl-CoA = a (2E)-enoyl-CoA + H2O. It catalyses the reaction a 4-saturated-(3S)-3-hydroxyacyl-CoA = a (3E)-enoyl-CoA + H2O. The enzyme catalyses (3S)-3-hydroxybutanoyl-CoA = (3R)-3-hydroxybutanoyl-CoA. It carries out the reaction a (3Z)-enoyl-CoA = a 4-saturated (2E)-enoyl-CoA. The catalysed reaction is a (3E)-enoyl-CoA = a 4-saturated (2E)-enoyl-CoA. Its pathway is lipid metabolism; fatty acid beta-oxidation. In terms of biological role, involved in the aerobic and anaerobic degradation of long-chain fatty acids via beta-oxidation cycle. Catalyzes the formation of 3-oxoacyl-CoA from enoyl-CoA via L-3-hydroxyacyl-CoA. It can also use D-3-hydroxyacyl-CoA and cis-3-enoyl-CoA as substrate. In Yersinia pseudotuberculosis serotype O:1b (strain IP 31758), this protein is Fatty acid oxidation complex subunit alpha.